Reading from the N-terminus, the 319-residue chain is DNA-directed RNA polymerases IV and V subunit 3B (319 aa).

N-acetylmethionine is present on M1.

The protein belongs to the archaeal Rpo3/eukaryotic RPB3 RNA polymerase subunit family. In terms of assembly, component of the RNA polymerase IV and V complexes. Interacts with NRPB11, SHH1, GRP23 and NRPD1.

The protein resides in the nucleus. Its function is as follows. DNA-dependent RNA polymerase catalyzes the transcription of DNA into RNA using the four ribonucleoside triphosphates as substrates. Component of RNA polymerases IV and V which mediate short-interfering RNAs (siRNA) accumulation and subsequent RNA-directed DNA methylation-dependent (RdDM) transcriptional gene silencing (TGS) of endogenous repeated sequences, including transposable elements. The chain is DNA-directed RNA polymerases IV and V subunit 3B (NRPD3B) from Arabidopsis thaliana (Mouse-ear cress).